The following is an 82-amino-acid chain: Protein transport protein Sec61 subunit beta (82 aa).

Methionine 1 carries the N-acetylmethionine modification. Positions 1–34 are disordered; it reads MVGSGAPQRGSAAATASMRRRKPTSGAGGGGASG. The Cytoplasmic segment spans residues 1–55; that stretch reads MVGSGAPQRGSAAATASMRRRKPTSGAGGGGASGGAAGSMLQFYTDDAPGLKISP. A helical membrane pass occupies residues 56–76; the sequence is NVVLIMSIGFIAFVAVLHVMG.

It belongs to the SEC61-beta family. As to quaternary structure, heterotrimeric complex composed of SEC61-alpha, SEC61-beta and SEC61-gamma.

Its subcellular location is the endoplasmic reticulum membrane. In terms of biological role, necessary for protein translocation in the endoplasmic reticulum. In Arabidopsis thaliana (Mouse-ear cress), this protein is Protein transport protein Sec61 subunit beta.